The sequence spans 425 residues: D-amino acid dehydrogenase (425 aa).

FAD is bound at residue 3–17; sequence VLVMGAGVIGVTTAY.

The protein belongs to the DadA oxidoreductase family. It depends on FAD as a cofactor.

It catalyses the reaction a D-alpha-amino acid + A + H2O = a 2-oxocarboxylate + AH2 + NH4(+). The protein operates within amino-acid degradation; D-alanine degradation; NH(3) and pyruvate from D-alanine: step 1/1. Its function is as follows. Oxidative deamination of D-amino acids. The polypeptide is D-amino acid dehydrogenase (Rhodopseudomonas palustris (strain HaA2)).